The following is a 259-amino-acid chain: MEIVIRQTPSEVSSTVADIVEGYVRRGPATLGLATGSSPLGSYRELARRHRESGLDFSDARAFLLDEYVGLPKSHDQSYFSVIRSEFVDHVNLDTDRVLSPNGESPDIAEEGARYDAAIAEAGGVDVQLLGIGTDGHIGFNEPGSALTSRTRVKTLTEQTRLDNARFFDSVDDVPHHVLTQGLGTIGEARHLVMIAFGKGKAEAIAAAAEGPLSAFCPASVMQLHRHVTVVIDEAAASKLQLADYYRYALEHKPSWQSF.

Residue aspartate 66 is the Proton acceptor; for enolization step of the active site. The active-site For ring-opening step is the aspartate 135. Histidine 137 (proton acceptor; for ring-opening step) is an active-site residue. Residue glutamate 142 is the For ring-opening step of the active site.

This sequence belongs to the glucosamine/galactosamine-6-phosphate isomerase family. NagB subfamily.

The enzyme catalyses alpha-D-glucosamine 6-phosphate + H2O = beta-D-fructose 6-phosphate + NH4(+). The protein operates within amino-sugar metabolism; N-acetylneuraminate degradation; D-fructose 6-phosphate from N-acetylneuraminate: step 5/5. Catalyzes the reversible isomerization-deamination of glucosamine 6-phosphate (GlcN6P) to form fructose 6-phosphate (Fru6P) and ammonium ion. In Rhodococcus jostii (strain RHA1), this protein is Glucosamine-6-phosphate deaminase.